The sequence spans 319 residues: Ribose-phosphate pyrophosphokinase (319 aa).

ATP contacts are provided by residues 40–42 (DGE) and 99–100 (RQ). The Mg(2+) site is built by His134 and Asp174. Lys198 is an active-site residue. Residues Arg200, Asp224, and 228–232 (DTAGT) contribute to the D-ribose 5-phosphate site.

The protein belongs to the ribose-phosphate pyrophosphokinase family. Class I subfamily. As to quaternary structure, homohexamer. Requires Mg(2+) as cofactor.

It is found in the cytoplasm. The enzyme catalyses D-ribose 5-phosphate + ATP = 5-phospho-alpha-D-ribose 1-diphosphate + AMP + H(+). Its pathway is metabolic intermediate biosynthesis; 5-phospho-alpha-D-ribose 1-diphosphate biosynthesis; 5-phospho-alpha-D-ribose 1-diphosphate from D-ribose 5-phosphate (route I): step 1/1. In terms of biological role, involved in the biosynthesis of the central metabolite phospho-alpha-D-ribosyl-1-pyrophosphate (PRPP) via the transfer of pyrophosphoryl group from ATP to 1-hydroxyl of ribose-5-phosphate (Rib-5-P). The polypeptide is Ribose-phosphate pyrophosphokinase (Xanthomonas campestris pv. campestris (strain ATCC 33913 / DSM 3586 / NCPPB 528 / LMG 568 / P 25)).